Reading from the N-terminus, the 279-residue chain is Thymidylate synthase (279 aa).

133–134 (RR) is a binding site for dUMP. Residue C154 is the Nucleophile of the active site. DUMP contacts are provided by residues 178 to 181 (RSND), N189, and 219 to 221 (HIY). Residue D181 participates in (6R)-5,10-methylene-5,6,7,8-tetrahydrofolate binding. Position 278 (A278) interacts with (6R)-5,10-methylene-5,6,7,8-tetrahydrofolate.

Belongs to the thymidylate synthase family. Bacterial-type ThyA subfamily. Homodimer.

The protein resides in the cytoplasm. It carries out the reaction dUMP + (6R)-5,10-methylene-5,6,7,8-tetrahydrofolate = 7,8-dihydrofolate + dTMP. It functions in the pathway pyrimidine metabolism; dTTP biosynthesis. Its function is as follows. Catalyzes the reductive methylation of 2'-deoxyuridine-5'-monophosphate (dUMP) to 2'-deoxythymidine-5'-monophosphate (dTMP) while utilizing 5,10-methylenetetrahydrofolate (mTHF) as the methyl donor and reductant in the reaction, yielding dihydrofolate (DHF) as a by-product. This enzymatic reaction provides an intracellular de novo source of dTMP, an essential precursor for DNA biosynthesis. The polypeptide is Thymidylate synthase (Streptococcus suis (strain 05ZYH33)).